Reading from the N-terminus, the 199-residue chain is N-(5'-phosphoribosyl)anthranilate isomerase (199 aa).

The protein belongs to the TrpF family.

It carries out the reaction N-(5-phospho-beta-D-ribosyl)anthranilate = 1-(2-carboxyphenylamino)-1-deoxy-D-ribulose 5-phosphate. It participates in amino-acid biosynthesis; L-tryptophan biosynthesis; L-tryptophan from chorismate: step 3/5. This Streptococcus pneumoniae (strain ATCC BAA-255 / R6) protein is N-(5'-phosphoribosyl)anthranilate isomerase.